The following is a 458-amino-acid chain: Enolase (458 aa).

Gln177 provides a ligand contact to (2R)-2-phosphoglycerate. Glu219 serves as the catalytic Proton donor. Asp256, Glu310, and Asp337 together coordinate Mg(2+). (2R)-2-phosphoglycerate contacts are provided by Lys362, Arg391, Ser392, and Lys413. The active-site Proton acceptor is the Lys362.

It belongs to the enolase family. The cofactor is Mg(2+).

Its subcellular location is the cytoplasm. The protein resides in the secreted. It localises to the cell surface. It carries out the reaction (2R)-2-phosphoglycerate = phosphoenolpyruvate + H2O. It participates in carbohydrate degradation; glycolysis; pyruvate from D-glyceraldehyde 3-phosphate: step 4/5. Its function is as follows. Catalyzes the reversible conversion of 2-phosphoglycerate (2-PG) into phosphoenolpyruvate (PEP). It is essential for the degradation of carbohydrates via glycolysis. In Mycoplasma genitalium (strain ATCC 33530 / DSM 19775 / NCTC 10195 / G37) (Mycoplasmoides genitalium), this protein is Enolase.